Reading from the N-terminus, the 184-residue chain is ATP synthase subunit b, chloroplastic (184 aa).

A helical membrane pass occupies residues 27–49 (LATNPINLSVVLGVLIFFGKGVL).

It belongs to the ATPase B chain family. F-type ATPases have 2 components, F(1) - the catalytic core - and F(0) - the membrane proton channel. F(1) has five subunits: alpha(3), beta(3), gamma(1), delta(1), epsilon(1). F(0) has four main subunits: a(1), b(1), b'(1) and c(10-14). The alpha and beta chains form an alternating ring which encloses part of the gamma chain. F(1) is attached to F(0) by a central stalk formed by the gamma and epsilon chains, while a peripheral stalk is formed by the delta, b and b' chains.

Its subcellular location is the plastid. It localises to the chloroplast thylakoid membrane. In terms of biological role, f(1)F(0) ATP synthase produces ATP from ADP in the presence of a proton or sodium gradient. F-type ATPases consist of two structural domains, F(1) containing the extramembraneous catalytic core and F(0) containing the membrane proton channel, linked together by a central stalk and a peripheral stalk. During catalysis, ATP synthesis in the catalytic domain of F(1) is coupled via a rotary mechanism of the central stalk subunits to proton translocation. Functionally, component of the F(0) channel, it forms part of the peripheral stalk, linking F(1) to F(0). The chain is ATP synthase subunit b, chloroplastic from Atropa belladonna (Belladonna).